A 279-amino-acid polypeptide reads, in one-letter code: Small ribosomal subunit protein uS2 (279 aa).

The interval 232–279 (RRRGTDEKPEAGVASDEPLAEWERELLEEPKKSDEPKSDEQPAAAAAE) is disordered. Basic and acidic residues predominate over residues 252-271 (EWERELLEEPKKSDEPKSDE).

Belongs to the universal ribosomal protein uS2 family.

This is Small ribosomal subunit protein uS2 from Salinispora arenicola (strain CNS-205).